The sequence spans 98 residues: Cobalt transport protein CbiN (98 aa).

A run of 2 helical transmembrane segments spans residues 6–26 (VLMI…YSGL) and 68–88 (SLLF…FFGY).

Belongs to the CbiN family. In terms of assembly, forms an energy-coupling factor (ECF) transporter complex composed of an ATP-binding protein (A component, CbiO), a transmembrane protein (T component, CbiQ) and 2 possible substrate-capture proteins (S components, CbiM and CbiN) of unknown stoichimetry.

The protein resides in the cell membrane. The protein operates within cofactor biosynthesis; adenosylcobalamin biosynthesis. Part of the energy-coupling factor (ECF) transporter complex CbiMNOQ involved in cobalt import. The sequence is that of Cobalt transport protein CbiN from Methanococcus maripaludis (strain DSM 14266 / JCM 13030 / NBRC 101832 / S2 / LL).